The chain runs to 184 residues: Orotate phosphoribosyltransferase (184 aa).

5-phospho-alpha-D-ribose 1-diphosphate-binding positions include R99, K100, K103, H105, and 125-133 (EDTTTTGNS). Residues T129 and R157 each contribute to the orotate site.

The protein belongs to the purine/pyrimidine phosphoribosyltransferase family. PyrE subfamily. Homodimer. The cofactor is Mg(2+).

The catalysed reaction is orotidine 5'-phosphate + diphosphate = orotate + 5-phospho-alpha-D-ribose 1-diphosphate. Its pathway is pyrimidine metabolism; UMP biosynthesis via de novo pathway; UMP from orotate: step 1/2. Catalyzes the transfer of a ribosyl phosphate group from 5-phosphoribose 1-diphosphate to orotate, leading to the formation of orotidine monophosphate (OMP). This Corynebacterium glutamicum (strain ATCC 13032 / DSM 20300 / JCM 1318 / BCRC 11384 / CCUG 27702 / LMG 3730 / NBRC 12168 / NCIMB 10025 / NRRL B-2784 / 534) protein is Orotate phosphoribosyltransferase.